Here is an 85-residue protein sequence, read N- to C-terminus: Small proline-rich protein 2D (85 aa).

The segment covering 1–11 (MSYQQQQCKQP) has biased composition (low complexity). Positions 1-20 (MSYQQQQCKQPCQPPPVCPP) are disordered. 4 tandem repeats follow at residues 21–29 (KKCPEPCPP), 30–38 (LKCPEPCPP), 39–47 (PKCPEPCPP), and 48–56 (PKCPEPCPE). The 4 X 9 AA approximate tandem repeats stretch occupies residues 21–56 (KKCPEPCPPLKCPEPCPPPKCPEPCPPPKCPEPCPE). A disordered region spans residues 57–85 (PCPPPSCQQKCPPAQPPPPCQQKCPPKSK).

Belongs to the cornifin (SPRR) family. In terms of tissue distribution, expressed in uterus.

Its subcellular location is the cytoplasm. In terms of biological role, cross-linked envelope protein of keratinocytes. It is a keratinocyte protein that first appears in the cell cytosol, but ultimately becomes cross-linked to membrane proteins by transglutaminase. All that results in the formation of an insoluble envelope beneath the plasma membrane. The sequence is that of Small proline-rich protein 2D (Sprr2d) from Mus musculus (Mouse).